The primary structure comprises 182 residues: Dual-action ribosomal maturation protein DarP (182 aa).

It belongs to the DarP family.

It localises to the cytoplasm. In terms of biological role, member of a network of 50S ribosomal subunit biogenesis factors which assembles along the 30S-50S interface, preventing incorrect 23S rRNA structures from forming. Promotes peptidyl transferase center (PTC) maturation. In Serratia proteamaculans (strain 568), this protein is Dual-action ribosomal maturation protein DarP.